Reading from the N-terminus, the 109-residue chain is Mannose-specific lectin (109 aa).

In terms of domain architecture, Bulb-type lectin spans 25-109 (MQEDCNLVLY…ARWATGTNIH (85 aa)). Alpha-D-mannopyranose-binding residues include Gln26, Asp28, Asn30, Tyr34, Asp37, Lys38, Trp41, Ala42, Asn44, Gln57, Asp59, Asn61, Tyr65, Ile72, Trp73, Asn76, Asn83, Gln89, Asp91, Asn93, Tyr97, and Trp102. A disulfide bond links Cys29 and Cys52.

In terms of assembly, homotetramer; antiparallel. Detected in bulbs (at protein level).

It is found in the secreted. Its activity is regulated as follows. Strongly inhibited by alpha-1,6-linked mannotriose. Inhibited by various oligosaccharides of P.pastoris mannan including, Man(alpha-l,6)Man-alpha-O-Me, Man(alpha-l,2)Man, Man(alpha-l,3)Man-alpha-O-Me, Man(alpha-l,2)Man, alpha-1,2-linked mannotriose, and Man(alpha-1,6)Glc, in order of decreasing potency. Weakly inhibited by elsinotetraose. Not inhibited by maltose or nigerose. In terms of biological role, D-mannose-binding lectin which binds alpha-D-linked mannose. Displays a high affinity for alpha-(1-6)-mannose oligomers. Able to interact with both terminal and internal alpha-D-mannosyl residues. Displays antiviral activity and therefore may contribute to defense against infections. This is Mannose-specific lectin from Narcissus pseudonarcissus (Daffodil).